The following is a 209-amino-acid chain: Orotate phosphoribosyltransferase (209 aa).

5-phospho-alpha-D-ribose 1-diphosphate is bound by residues R96, K100, H102, and 122 to 130; that span reads EDLISTGKS. Position 126 (S126) interacts with orotate.

It belongs to the purine/pyrimidine phosphoribosyltransferase family. PyrE subfamily. Homodimer. Mg(2+) serves as cofactor.

The enzyme catalyses orotidine 5'-phosphate + diphosphate = orotate + 5-phospho-alpha-D-ribose 1-diphosphate. It functions in the pathway pyrimidine metabolism; UMP biosynthesis via de novo pathway; UMP from orotate: step 1/2. In terms of biological role, catalyzes the transfer of a ribosyl phosphate group from 5-phosphoribose 1-diphosphate to orotate, leading to the formation of orotidine monophosphate (OMP). The sequence is that of Orotate phosphoribosyltransferase from Coxiella burnetii (strain RSA 493 / Nine Mile phase I).